A 124-amino-acid polypeptide reads, in one-letter code: Large ribosomal subunit protein eL31 (124 aa).

It belongs to the eukaryotic ribosomal protein eL31 family. In terms of assembly, component of the large ribosomal subunit.

It localises to the cytoplasm. In terms of biological role, component of the large ribosomal subunit. The ribosome is a large ribonucleoprotein complex responsible for the synthesis of proteins in the cell. The sequence is that of Large ribosomal subunit protein eL31 (rpl31) from Paralichthys olivaceus (Bastard halibut).